The following is a 203-amino-acid chain: Small ribosomal subunit protein uS5 (203 aa).

Residues 49–112 enclose the S5 DRBM domain; the sequence is FEERVVKIKR…KNANNNLIKV (64 aa).

It belongs to the universal ribosomal protein uS5 family. Part of the 30S ribosomal subunit. Contacts proteins S4 and S8.

Its function is as follows. With S4 and S12 plays an important role in translational accuracy. In terms of biological role, located at the back of the 30S subunit body where it stabilizes the conformation of the head with respect to the body. The protein is Small ribosomal subunit protein uS5 of Ureaplasma parvum serovar 3 (strain ATCC 700970).